A 504-amino-acid chain; its full sequence is Glycerol kinase (504 aa).

Thr14 serves as a coordination point for ADP. Residues Thr14, Thr15, and Ser16 each contribute to the ATP site. Residue Thr14 coordinates sn-glycerol 3-phosphate. Residue Arg18 coordinates ADP. Residues Arg84, Glu85, Tyr136, and Asp246 each contribute to the sn-glycerol 3-phosphate site. Glycerol is bound by residues Arg84, Glu85, Tyr136, Asp246, and Gln247. Thr268 and Gly311 together coordinate ADP. ATP is bound by residues Thr268, Gly311, Gln315, and Gly412. Gly412 and Asn416 together coordinate ADP.

It belongs to the FGGY kinase family.

The catalysed reaction is glycerol + ATP = sn-glycerol 3-phosphate + ADP + H(+). It functions in the pathway polyol metabolism; glycerol degradation via glycerol kinase pathway; sn-glycerol 3-phosphate from glycerol: step 1/1. Inhibited by fructose 1,6-bisphosphate (FBP). Functionally, key enzyme in the regulation of glycerol uptake and metabolism. Catalyzes the phosphorylation of glycerol to yield sn-glycerol 3-phosphate. The polypeptide is Glycerol kinase (Aliivibrio fischeri (strain ATCC 700601 / ES114) (Vibrio fischeri)).